A 548-amino-acid chain; its full sequence is Chaperonin GroEL (548 aa).

Residues 30 to 33, Lys-51, 87 to 91, Gly-415, and Asp-494 contribute to the ATP site; these read TLGP and DGTTT.

The protein belongs to the chaperonin (HSP60) family. In terms of assembly, forms a cylinder of 14 subunits composed of two heptameric rings stacked back-to-back. Interacts with the co-chaperonin GroES.

The protein localises to the cytoplasm. It catalyses the reaction ATP + H2O + a folded polypeptide = ADP + phosphate + an unfolded polypeptide.. Its function is as follows. Together with its co-chaperonin GroES, plays an essential role in assisting protein folding. The GroEL-GroES system forms a nano-cage that allows encapsulation of the non-native substrate proteins and provides a physical environment optimized to promote and accelerate protein folding. The sequence is that of Chaperonin GroEL from Oleispira antarctica.